The sequence spans 89 residues: Elongation factor 1-beta (89 aa).

This sequence belongs to the EF-1-beta/EF-1-delta family.

Promotes the exchange of GDP for GTP in EF-1-alpha/GDP, thus allowing the regeneration of EF-1-alpha/GTP that could then be used to form the ternary complex EF-1-alpha/GTP/AAtRNA. The polypeptide is Elongation factor 1-beta (Methanosarcina barkeri (strain Fusaro / DSM 804)).